The chain runs to 235 residues: Ribonuclease 3 (235 aa).

An RNase III domain is found at 7-131; sequence LSALEARIGH…IIGAVFLDGG (125 aa). A Mg(2+)-binding site is contributed by E45. The active site involves D49. Mg(2+) is bound by residues D117 and E120. E120 is a catalytic residue. The DRBM domain maps to 156-225; it reads DPKTTLQEWA…AAAFLTREKI (70 aa).

This sequence belongs to the ribonuclease III family. In terms of assembly, homodimer. Requires Mg(2+) as cofactor.

It is found in the cytoplasm. It catalyses the reaction Endonucleolytic cleavage to 5'-phosphomonoester.. Its function is as follows. Digests double-stranded RNA. Involved in the processing of primary rRNA transcript to yield the immediate precursors to the large and small rRNAs (23S and 16S). Processes some mRNAs, and tRNAs when they are encoded in the rRNA operon. Processes pre-crRNA and tracrRNA of type II CRISPR loci if present in the organism. This is Ribonuclease 3 from Methylocella silvestris (strain DSM 15510 / CIP 108128 / LMG 27833 / NCIMB 13906 / BL2).